The following is a 388-amino-acid chain: Ferrochelatase (388 aa).

H196 and E277 together coordinate Fe cation.

It belongs to the ferrochelatase family.

Its subcellular location is the cytoplasm. It catalyses the reaction heme b + 2 H(+) = protoporphyrin IX + Fe(2+). It participates in porphyrin-containing compound metabolism; protoheme biosynthesis; protoheme from protoporphyrin-IX: step 1/1. Its function is as follows. Catalyzes the ferrous insertion into protoporphyrin IX. In Nostoc punctiforme (strain ATCC 29133 / PCC 73102), this protein is Ferrochelatase.